The primary structure comprises 429 residues: MKKKPFYKVLYVQVIFAIIVGVILGHYYPALATDMKPLGDGFIKLIKMVIGPIIFCTVVTGIAGMEDMKKVGRVGGKALLYFEIVSTFALLLGLAATHILRPGVGFNIDPATLDGKAVASYAAKAHGQSTVDFLMHIIPNTMVDAFAQGEILQILLIALLFGSVLAHLGERGKVVTDFIDGLTRVLFGIVHIVTKLAPIGAFGAMAFTIGKYGVGSLVPLLKLIGTFYLTSVVFVLVVLGTIARFTGFSIIRFVSYIKEELLIVLGTSSSEAALPQLMEKLEKAGCSRSVVGLVVPTGYSFNLDGTNIYMTMAVLFIAQATNIELTWMQQLTLLAVAMLTSKGASGVTGAGFITLAATLAVVPTIPLSGMVLILGIDRFMSECRALTNIVGNGVATVVVSAWEKELDRNKLRQALTGGGEVTTTETAGV.

Helical transmembrane passes span 9 to 29, 45 to 65, 79 to 99, 149 to 169, 185 to 205, 223 to 243, 308 to 328, and 356 to 376; these read VLYV…HYYP, LIKM…IAGM, LLYF…ATHI, GEIL…AHLG, VLFG…FGAM, LIGT…GTIA, IYMT…LTWM, and AATL…ILGI.

Belongs to the dicarboxylate/amino acid:cation symporter (DAACS) (TC 2.A.23) family.

It localises to the cell inner membrane. Functionally, responsible for the transport of dicarboxylates such as succinate, fumarate, and malate from the periplasm across the membrane. The sequence is that of C4-dicarboxylate transport protein from Burkholderia lata (strain ATCC 17760 / DSM 23089 / LMG 22485 / NCIMB 9086 / R18194 / 383).